Consider the following 404-residue polypeptide: Glucose-1-phosphate adenylyltransferase (404 aa).

Residues Tyr-99, Gly-164, 179–180 (EK), and Ser-197 each bind alpha-D-glucose 1-phosphate.

This sequence belongs to the bacterial/plant glucose-1-phosphate adenylyltransferase family. Homotetramer.

It catalyses the reaction alpha-D-glucose 1-phosphate + ATP + H(+) = ADP-alpha-D-glucose + diphosphate. Its pathway is glycan biosynthesis; glycogen biosynthesis. Involved in the biosynthesis of ADP-glucose, a building block required for the elongation reactions to produce glycogen. Catalyzes the reaction between ATP and alpha-D-glucose 1-phosphate (G1P) to produce pyrophosphate and ADP-Glc. The polypeptide is Glucose-1-phosphate adenylyltransferase (Rhodococcus opacus (strain B4)).